The sequence spans 480 residues: MNAVTKITPHTDYKIADISLADWGRKELDIAEHEMPGLMSIRRKHAQTKPLKDVRITGSLHMTIQTAVLIETLKDIGADVRWASCNIFSTQDHAAAAIAATGTPVFAWKGETLEEYWDCTLDALTFTLPDGTLTGPELVVDDGGDVTLLIHKGYELENGSTWVDEPASSHEEGVIKALLKRVAVERPGYWGRVVKDWKGVSEETTTGVHRLYQIAEAGKLLIPAINVNDSVTKSKFDNLYGCRESLADGLKRAMDVMLAGKVAVVCGYGDVGKGSAASLRAYGARVIVTEIDPICALQASMEGFEVNTIESTLGRADIYVTTTGNKDIITVEHLQAMKDQAIVCNIGHFDNEIQVDALKALKDVQKINIKPQVDKYVFPNGNAIFLLADGRLVNLGCATGHPSFVMSNSFANQTLAQIDLWEKRDTYEKKVYILPKHLDEEVARLHLEKIGVKLTTLTKDQADYLGVDVAGPYKPDHYRY.

Residues T63, D142, and E203 each contribute to the substrate site. 204–206 (TTT) lines the NAD(+) pocket. Positions 233 and 237 each coordinate substrate. NAD(+)-binding positions include N238, 267 to 272 (GYGDVG), E290, N325, 346 to 348 (IGH), and N394.

The protein belongs to the adenosylhomocysteinase family. The cofactor is NAD(+).

The protein localises to the cytoplasm. It catalyses the reaction S-adenosyl-L-homocysteine + H2O = L-homocysteine + adenosine. It participates in amino-acid biosynthesis; L-homocysteine biosynthesis; L-homocysteine from S-adenosyl-L-homocysteine: step 1/1. Its function is as follows. May play a key role in the regulation of the intracellular concentration of adenosylhomocysteine. The sequence is that of Adenosylhomocysteinase from Xanthomonas axonopodis pv. citri (strain 306).